Reading from the N-terminus, the 413-residue chain is Protein PHR1-LIKE 1 (413 aa).

Disordered stretches follow at residues 171 to 196 (SEPN…TPFL) and 208 to 233 (QQQM…SKQR). 2 stretches are compositionally biased toward polar residues: residues 181 to 191 (DSSSHNPNSEI) and 208 to 231 (QQQM…ATSK). The 61-residue stretch at 228–288 (ATSKQRMRWT…HLQKYRTARY (61 aa)) folds into the HTH myb-type domain. The H-T-H motif DNA-binding region spans 259 to 284 (PKAVLKLLNNPGLTIYHVKSHLQKYR). The coiled coil stretch occupies residues 322–342 (TQALRLQMEVQKRLHEQLEIQ). The LHEQLE signature appears at 335-340 (LHEQLE). The interval 363 to 413 (QQKIQDNKSSSSEASPKQCNGSFAEVEVGLETLTGDQNESASASRKRVRED) is disordered. 2 stretches are compositionally biased toward polar residues: residues 369 to 383 (NKSS…QCNG) and 396 to 405 (TGDQNESASA).

It belongs to the MYB-CC family. In terms of assembly, homodimers and heterodimers. Interacts with MED25. Does not interact with PHL2 or PHL3. As to expression, expressed in shoots and roots.

Its subcellular location is the nucleus. Functionally, transcription factor acting as central integrator of phosphate starvation responses. Regulates FER1 expression upon phosphate starvation, linking iron and phosphate homeostasis. This chain is Protein PHR1-LIKE 1 (PHL1), found in Arabidopsis thaliana (Mouse-ear cress).